A 239-amino-acid polypeptide reads, in one-letter code: MATSGRLSFTVRSLLDLPEQDAQHLPRREPEPRAPQPDPCAAWLDSERGHYPSSDESSLETSPPDSSQRPSARPASPGSDAEKRKKRRVLFSKAQTLELERRFRQQRYLSAPEREQLASLLRLTPTQVKIWFQNHRYKLKRARAPGAAESPDLAASAELHAAPGLLRRVVVPVLVRDGQPCGGGGGGEVGTAAAQEKCGAPPAAACPLPGYPAFGPGSALGLFPAYQHLASPALVSWNW.

Polar residues predominate over residues Met-1–Val-11. The tract at residues Met-1–Arg-87 is disordered. Basic and acidic residues predominate over residues Asp-21–Pro-32. Over residues Ser-62–Ser-79 the composition is skewed to low complexity. A DNA-binding region (homeobox) is located at residues Arg-84 to Arg-143.

This sequence belongs to the NK-2 homeobox family.

The protein resides in the nucleus. The chain is Homeobox protein Nkx-2.8 (NKX2-8) from Homo sapiens (Human).